The sequence spans 640 residues: LRR receptor kinase SERL2 (640 aa).

Positions 1 to 22 are cleaved as a signal peptide; sequence MEPPFFLLLLLLVVSSSSPSAA. Residues 23–241 are Extracellular-facing; sequence LLSAKGVNNE…AARDRGHKFA (219 aa). N94 and N107 each carry an N-linked (GlcNAc...) asparagine glycan. 4 LRR repeats span residues 95–119, 120–143, 145–167, and 168–191; these read LTNL…IGRL, ENLK…VGHL, SLQY…SANL, and SHLV…LART. N153, N166, N179, and N222 each carry an N-linked (GlcNAc...) asparagine glycan. The helical transmembrane segment at 242-262 threads the bilayer; that stretch reads VAFGSTAGCMGLLLLAAGFLF. The Cytoplasmic portion of the chain corresponds to 263–640; sequence WWRHRRNRQI…VQAVELSGPR (378 aa). Residues 304–583 form the Protein kinase domain; the sequence is FSGKNILGKG…EGDGLADRWE (280 aa). ATP-binding positions include 310–318 and K332; that span reads LGKGGFGNV. The Proton acceptor role is filled by D427.

The protein belongs to the protein kinase superfamily. Ser/Thr protein kinase family. As to quaternary structure, interacts with MSBP1.

It is found in the cell membrane. The enzyme catalyses L-seryl-[protein] + ATP = O-phospho-L-seryl-[protein] + ADP + H(+). It carries out the reaction L-threonyl-[protein] + ATP = O-phospho-L-threonyl-[protein] + ADP + H(+). LRR receptor kinase that may be involved in defense response. This is LRR receptor kinase SERL2 from Oryza sativa subsp. japonica (Rice).